The primary structure comprises 409 residues: Putative lipoate-protein ligase A (409 aa).

A BPL/LPL catalytic domain is found at 146 to 330 (GPDNCRLLFY…RFQKTFKVDG (185 aa)). ATP is bound by residues R188, 193–196 (GTVL), and K249. Position 249 (K249) interacts with (R)-lipoate.

It belongs to the LplA family. As to quaternary structure, monomer.

The catalysed reaction is L-lysyl-[lipoyl-carrier protein] + (R)-lipoate + ATP = N(6)-[(R)-lipoyl]-L-lysyl-[lipoyl-carrier protein] + AMP + diphosphate + H(+). Its pathway is protein modification; protein lipoylation via exogenous pathway; protein N(6)-(lipoyl)lysine from lipoate: step 1/2. The protein operates within protein modification; protein lipoylation via exogenous pathway; protein N(6)-(lipoyl)lysine from lipoate: step 2/2. Functionally, catalyzes both the ATP-dependent activation of exogenously supplied lipoate to lipoyl-AMP and the transfer of the activated lipoyl onto the lipoyl domains of lipoate-dependent enzymes. The polypeptide is Putative lipoate-protein ligase A (AIM22) (Saccharomyces cerevisiae (strain RM11-1a) (Baker's yeast)).